The primary structure comprises 128 residues: Probable 4-amino-4-deoxy-L-arabinose-phosphoundecaprenol flippase subunit ArnF (128 aa).

Topologically, residues 1–10 (MKGYLWGGAS) are cytoplasmic. The helical transmembrane segment at 11 to 31 (VVLVTVAQLVLKWGMMNIPLL) threads the bilayer. Over 32–47 (SLADINVQFLTMYFVQ) the chain is Periplasmic. A helical transmembrane segment spans residues 48–68 (LASVMCGLMGYALSMLCWFFA). The Cytoplasmic portion of the chain corresponds to 69–77 (LRYLPLNRA). Residues 78–98 (YPLLSLSYALVYLGAVLLPWF) form a helical membrane-spanning segment. Topologically, residues 99-101 (NEP) are periplasmic. The chain crosses the membrane as a helical span at residues 102-122 (ATLLKTLGAGFILLGIWLINI). Over 123 to 128 (KPIKAS) the chain is Cytoplasmic.

Belongs to the ArnF family. As to quaternary structure, heterodimer of ArnE and ArnF.

The protein resides in the cell inner membrane. It functions in the pathway bacterial outer membrane biogenesis; lipopolysaccharide biosynthesis. In terms of biological role, translocates 4-amino-4-deoxy-L-arabinose-phosphoundecaprenol (alpha-L-Ara4N-phosphoundecaprenol) from the cytoplasmic to the periplasmic side of the inner membrane. This is Probable 4-amino-4-deoxy-L-arabinose-phosphoundecaprenol flippase subunit ArnF from Yersinia pseudotuberculosis serotype O:1b (strain IP 31758).